The primary structure comprises 608 residues: Endo-1,4-beta-xylanase C (608 aa).

An N-terminal signal peptide occupies residues methionine 1–alanine 25. A GH11 1 domain is found at threonine 40–methionine 250. Glutamate 142 acts as the Nucleophile in catalysis. The active-site Proton donor is glutamate 237. Low complexity predominate over residues serine 263–lysine 294. The tract at residues serine 263 to aspartate 296 is disordered. Residues asparagine 316–phenylalanine 514 enclose the GH11 2 domain. Residue glutamate 409 is the Nucleophile of the active site. Glutamate 501 functions as the Proton donor in the catalytic mechanism. Positions alanine 520–serine 539 are disordered. The span at glutamate 527–serine 539 shows a compositional bias: low complexity.

Belongs to the glycosyl hydrolase 11 (cellulase G) family.

It carries out the reaction Endohydrolysis of (1-&gt;4)-beta-D-xylosidic linkages in xylans.. It participates in glycan degradation; xylan degradation. Cleaves xylans with the production of xylose, xylobiose and xylo-oligosaccharides. The chain is Endo-1,4-beta-xylanase C (xynC) from Fibrobacter succinogenes (strain ATCC 19169 / S85).